A 177-amino-acid polypeptide reads, in one-letter code: Peptide methionine sulfoxide reductase MsrA (177 aa).

The active site involves Cys-14.

Belongs to the MsrA Met sulfoxide reductase family.

It carries out the reaction L-methionyl-[protein] + [thioredoxin]-disulfide + H2O = L-methionyl-(S)-S-oxide-[protein] + [thioredoxin]-dithiol. The enzyme catalyses [thioredoxin]-disulfide + L-methionine + H2O = L-methionine (S)-S-oxide + [thioredoxin]-dithiol. Its function is as follows. Has an important function as a repair enzyme for proteins that have been inactivated by oxidation. Catalyzes the reversible oxidation-reduction of methionine sulfoxide in proteins to methionine. This Bacillus velezensis (strain DSM 23117 / BGSC 10A6 / LMG 26770 / FZB42) (Bacillus amyloliquefaciens subsp. plantarum) protein is Peptide methionine sulfoxide reductase MsrA.